We begin with the raw amino-acid sequence, 428 residues long: Histidine--tRNA ligase (428 aa).

The protein belongs to the class-II aminoacyl-tRNA synthetase family. Homodimer.

It is found in the cytoplasm. The enzyme catalyses tRNA(His) + L-histidine + ATP = L-histidyl-tRNA(His) + AMP + diphosphate + H(+). The protein is Histidine--tRNA ligase of Lactobacillus johnsonii (strain CNCM I-12250 / La1 / NCC 533).